We begin with the raw amino-acid sequence, 158 residues long: Endoribonuclease YbeY (158 aa).

Positions 124, 128, and 134 each coordinate Zn(2+).

The protein belongs to the endoribonuclease YbeY family. It depends on Zn(2+) as a cofactor.

It localises to the cytoplasm. Its function is as follows. Single strand-specific metallo-endoribonuclease involved in late-stage 70S ribosome quality control and in maturation of the 3' terminus of the 16S rRNA. This chain is Endoribonuclease YbeY, found in Caldanaerobacter subterraneus subsp. tengcongensis (strain DSM 15242 / JCM 11007 / NBRC 100824 / MB4) (Thermoanaerobacter tengcongensis).